The following is a 396-amino-acid chain: Ribosomal RNA small subunit methyltransferase H (396 aa).

S-adenosyl-L-methionine is bound by residues 101–103 (GGH), Asp-120, Tyr-147, Asp-171, and Gln-178.

This sequence belongs to the methyltransferase superfamily. RsmH family.

Its subcellular location is the cytoplasm. The catalysed reaction is cytidine(1402) in 16S rRNA + S-adenosyl-L-methionine = N(4)-methylcytidine(1402) in 16S rRNA + S-adenosyl-L-homocysteine + H(+). In terms of biological role, specifically methylates the N4 position of cytidine in position 1402 (C1402) of 16S rRNA. This chain is Ribosomal RNA small subunit methyltransferase H, found in Mycobacterium bovis (strain ATCC BAA-935 / AF2122/97).